A 210-amino-acid polypeptide reads, in one-letter code: Putative protein-lysine deacylase ABHD14B (210 aa).

An N-acetylalanine modification is found at A2. The residue at position 91 (S91) is a Phosphoserine. Residues S111, D162, and H188 each act as charge relay system in the active site.

The protein belongs to the AB hydrolase superfamily. ABHD14 family. As to quaternary structure, may interact with TAF1.

It is found in the cytoplasm. The protein localises to the nucleus. It catalyses the reaction L-lysyl-[protein] + acetyl-CoA = N(6)-acetyl-L-lysyl-[protein] + CoA + H(+). In terms of biological role, acts as an atypical protein-lysine deacetylase in vitro. Catalyzes the deacetylation of lysine residues using CoA as substrate, generating acetyl-CoA and the free amine of protein-lysine residues. Additional experiments are however required to confirm the protein-lysine deacetylase activity in vivo. Has hydrolase activity towards various surrogate p-nitrophenyl (pNp) substrates, such as pNp-butyrate, pNp-acetate and pNp-octanoate in vitro, with a strong preference for pNp-acetate. May activate transcription. The polypeptide is Putative protein-lysine deacylase ABHD14B (Pongo abelii (Sumatran orangutan)).